A 408-amino-acid polypeptide reads, in one-letter code: Peptidase T (408 aa).

Histidine 78 is a Zn(2+) binding site. Aspartate 80 is a catalytic residue. Aspartate 140 contributes to the Zn(2+) binding site. Residue glutamate 173 is the Proton acceptor of the active site. Residues glutamate 174, aspartate 196, and histidine 379 each coordinate Zn(2+).

Belongs to the peptidase M20B family. Zn(2+) is required as a cofactor.

It localises to the cytoplasm. The enzyme catalyses Release of the N-terminal residue from a tripeptide.. Cleaves the N-terminal amino acid of tripeptides. The chain is Peptidase T from Salmonella arizonae (strain ATCC BAA-731 / CDC346-86 / RSK2980).